The chain runs to 90 residues: uncharacterized protein (90 aa).

This is an uncharacterized protein from Thermoproteus tenax (TTV1).